We begin with the raw amino-acid sequence, 405 residues long: Pre-mRNA-splicing factor cwc-24 (405 aa).

Disordered stretches follow at residues 1-114 (MADT…NTIY) and 162-184 (TKKK…DGTY). A compositionally biased stretch (low complexity) spans 15–29 (EPTTATPTAPIAPVA). The span at 31-46 (FKKRGAKGKANLRKRP) shows a compositional bias: basic residues. The segment covering 56 to 70 (SDDDSSDFESSEDEA) has biased composition (acidic residues). Basic residues predominate over residues 74-83 (RIKRRKKNHH). The segment at 221–249 (DMAPDVCKDYKQTGFCGFGDNCKFLHARE) adopts a C3H1-type zinc-finger fold. An RING-type zinc finger spans residues 310–349 (CIICRGPYSNSPVVTRCGHYFCEACALKRYRKDPSCAACG). A compositionally biased stretch (basic and acidic residues) spans 370-386 (KARAERLRREARERGEE). Positions 370-405 (KARAERLRREARERGEEVSEEEDEGEDEGEGAEGSD) are disordered. Residues 387–405 (VSEEEDEGEDEGEGAEGSD) show a composition bias toward acidic residues.

Belongs to the CWC24 family. Associated with the spliceosome.

It is found in the nucleus. Involved in pre-mRNA splicing. The sequence is that of Pre-mRNA-splicing factor cwc-24 (cwc-24) from Neurospora crassa (strain ATCC 24698 / 74-OR23-1A / CBS 708.71 / DSM 1257 / FGSC 987).